We begin with the raw amino-acid sequence, 449 residues long: Required for meiotic nuclear division protein 1 homolog (449 aa).

A mitochondrion-targeting transit peptide spans 1 to 12 (MPATLLRAVARS).

It belongs to the RMD1/sif2 family. In terms of assembly, homooligomer.

The protein localises to the mitochondrion. Required for mitochondrial translation, possibly by coordinating the assembly or maintenance of the mitochondrial ribosome. This Homo sapiens (Human) protein is Required for meiotic nuclear division protein 1 homolog (RMND1).